The primary structure comprises 382 residues: Chaperone protein DnaJ 2 (382 aa).

Positions 4-68 constitute a J domain; that stretch reads DYYGLLGVSK…DKRRIVDLGG (65 aa). The segment at 132–214 adopts a CR-type zinc-finger fold; the sequence is GVTKQVTVDT…CMGDGRIRAR (83 aa). Zn(2+) is bound by residues cysteine 145, cysteine 148, cysteine 162, cysteine 165, cysteine 188, cysteine 191, cysteine 202, and cysteine 205. 4 CXXCXGXG motif repeats span residues 145 to 152, 162 to 169, 188 to 195, and 202 to 209; these read CDRCQGKG, CDTCGGRG, CPTCRGVG, and CQQCMGDG.

The protein belongs to the DnaJ family. As to quaternary structure, homodimer. Interacts with RNase J. Requires Zn(2+) as cofactor.

It localises to the cytoplasm. Its function is as follows. Participates actively in the response to hyperosmotic and heat shock by preventing the aggregation of stress-denatured proteins and by disaggregating proteins, also in an autonomous, DnaK-independent fashion. Unfolded proteins bind initially to DnaJ; upon interaction with the DnaJ-bound protein, DnaK hydrolyzes its bound ATP, resulting in the formation of a stable complex. GrpE releases ADP from DnaK; ATP binding to DnaK triggers the release of the substrate protein, thus completing the reaction cycle. Several rounds of ATP-dependent interactions between DnaJ, DnaK and GrpE are required for fully efficient folding. Also involved, together with DnaK and GrpE, in the DNA replication of plasmids through activation of initiation proteins. Inhibits the beta-lactamase and RNase activity of RNase J. This is Chaperone protein DnaJ 2 from Mycobacterium tuberculosis (strain ATCC 25618 / H37Rv).